The primary structure comprises 690 residues: MNSTSTVRQPGGPRQQRRHTPKANLSDLYQRAFKEAWVKLNPKIMVKNPVMFMVWVGTLITGMLTLNPNLFGVTGTSAMFNGLVTVILLFTVLFANFAEAVAEGRGKAQADALRSTQTQTYAQRILADGSLEMVSSTHLRKGDRIVVSVGDIIPADGEVLEGVASVDESAITGESAPVLKEPGSDVASSVTGGTRIISDELIIRVTADPGKGFIDRMIDLVEGAERSKTPNEIALTVLLAVLTLVFLIVVATLPPPANYIDSPVSITLLIALLVALIPTTIGGLLSAIGIAGMDRVAQFNVVATSGRAVEACGDINTLVLDKTGTITLGNRLAETFLPVNGHSLKEVAAIALAASIFDTTPEGKSIVRLAEKMGATLDFDRQQAEGVEFSARTRMSGTDLPDGSEVRKGAVDAIRGFVRSRGGKSPTGLDEAYGKVSHLGGTPLAVCRNDEIYGVIYLKDIIKPGIQERFNQLRRMGVRTVMLTGDNRITASVIAKEAGVDDFIAEATPEDKIQVIQQEQAAGKLVAMTGDGTNDAPALAQANVGLAMNSGTQAAKEAANMVDLDSDPTKLIDLVTIGKQLLITRGALTTFSLANDIAKYFAIIPAMFAGIGIGALNIMDLKSPQSAVLSALIYNALIIPALIPLALRGVKFRPLSADQLLQRNILVYGLGGIIVPFVAIKLIDLGISLL.

A disordered region spans residues 1 to 23; sequence MNSTSTVRQPGGPRQQRRHTPKA. Helical transmembrane passes span 44–64, 78–98, 233–253, and 268–288; these read IMVKNPVMFMVWVGTLITGML, AMFNGLVTVILLFTVLFANFA, IALTVLLAVLTLVFLIVVATL, and LLIALLVALIPTTIGGLLSAI. The active-site 4-aspartylphosphate intermediate is the Asp321. ATP-binding positions include Asp358, Glu362, 389–396, and Lys408; that span reads FSARTRMS. The Mg(2+) site is built by Asp531 and Asp535. The next 3 helical transmembrane spans lie at 601-621, 627-647, and 665-685; these read FAIIPAMFAGIGIGALNIMDL, AVLSALIYNALIIPALIPLAL, and ILVYGLGGIIVPFVAIKLIDL.

It belongs to the cation transport ATPase (P-type) (TC 3.A.3) family. Type IA subfamily. As to quaternary structure, the system is composed of three essential subunits: KdpA, KdpB and KdpC.

The protein resides in the cell inner membrane. It catalyses the reaction K(+)(out) + ATP + H2O = K(+)(in) + ADP + phosphate + H(+). Part of the high-affinity ATP-driven potassium transport (or Kdp) system, which catalyzes the hydrolysis of ATP coupled with the electrogenic transport of potassium into the cytoplasm. This subunit is responsible for energy coupling to the transport system and for the release of the potassium ions to the cytoplasm. This is Potassium-transporting ATPase ATP-binding subunit from Synechocystis sp. (strain ATCC 27184 / PCC 6803 / Kazusa).